Consider the following 525-residue polypeptide: Ribonuclease III domain-containing protein RNC1, chloroplastic (525 aa).

Residues 1-28 (MGPPAMAFQALTLTPLPFSLHSSSRRVR) constitute a chloroplast transit peptide. RNase III domains lie at 125 to 271 (LLEA…LCFG) and 403 to 503 (EHPR…CVYG).

In terms of assembly, interacts with RNA. Part of large ribonucleo-protein particles that contain CAF1 and/or CAF2.

It is found in the plastid. It localises to the chloroplast stroma. Binds specific group II introns in chloroplasts and facilitates their splicing. Acts on both subgroup IIA and subgroup IIB introns. The substrates of the subgroup II also require the CRM domain proteins CAF1 or CAF2. Binds both single-stranded and double-stranded RNA non-specifically, but lacks endonuclease activity. Required for plastid ribosome biogenesis. This Zea mays (Maize) protein is Ribonuclease III domain-containing protein RNC1, chloroplastic.